Reading from the N-terminus, the 230-residue chain is MVKLVFARHGESEWNKANLFTGWADVDLSEEGTQQAIDAGKLIKEADIKFDLAFTSVLTRAIKTTNLALEYSDQLWVPVEKSWRLNERHYGGLTGKNKAEAAEKFGDEQVHIWRRSYDVLPPAMAKDDPYSAHTDRRYANLDDTVIPDAENLKVTLERALPYWEDKIAPALKDGKNVFVGAHGNSIRALVKHIKQLSDDDIMGVEIPNFPPLVFEFDENLNVTAEYYLGK.

Residues 8–15 (RHGESEWN), 21–22 (TG), Arg60, 87–90 (ERHY), Lys98, 114–115 (RR), and 183–184 (GN) contribute to the substrate site. His9 (tele-phosphohistidine intermediate) is an active-site residue. Glu87 acts as the Proton donor/acceptor in catalysis.

This sequence belongs to the phosphoglycerate mutase family. BPG-dependent PGAM subfamily.

The enzyme catalyses (2R)-2-phosphoglycerate = (2R)-3-phosphoglycerate. It participates in carbohydrate degradation; glycolysis; pyruvate from D-glyceraldehyde 3-phosphate: step 3/5. Its function is as follows. Catalyzes the interconversion of 2-phosphoglycerate and 3-phosphoglycerate. The chain is 2,3-bisphosphoglycerate-dependent phosphoglycerate mutase from Streptococcus mutans serotype c (strain ATCC 700610 / UA159).